A 285-amino-acid polypeptide reads, in one-letter code: Ribosomal RNA large subunit methyltransferase F (285 aa).

Belongs to the methyltransferase superfamily. METTL16/RlmF family.

Its subcellular location is the cytoplasm. It catalyses the reaction adenosine(1618) in 23S rRNA + S-adenosyl-L-methionine = N(6)-methyladenosine(1618) in 23S rRNA + S-adenosyl-L-homocysteine + H(+). Specifically methylates the adenine in position 1618 of 23S rRNA. This is Ribosomal RNA large subunit methyltransferase F from Christiangramia forsetii (strain DSM 17595 / CGMCC 1.15422 / KT0803) (Gramella forsetii).